The primary structure comprises 311 residues: Ribosomal RNA small subunit methyltransferase H (311 aa).

S-adenosyl-L-methionine contacts are provided by residues 32-34 (AGH), D52, F79, D100, and Q107. The interval 287–311 (TASQEELEENNRARSAKLRIAEKRK) is disordered. A compositionally biased stretch (basic residues) spans 300–311 (RSAKLRIAEKRK).

It belongs to the methyltransferase superfamily. RsmH family.

The protein localises to the cytoplasm. It catalyses the reaction cytidine(1402) in 16S rRNA + S-adenosyl-L-methionine = N(4)-methylcytidine(1402) in 16S rRNA + S-adenosyl-L-homocysteine + H(+). Its function is as follows. Specifically methylates the N4 position of cytidine in position 1402 (C1402) of 16S rRNA. In Bacillus subtilis (strain 168), this protein is Ribosomal RNA small subunit methyltransferase H.